A 415-amino-acid polypeptide reads, in one-letter code: JmjC domain-containing protein C (415 aa).

Residues 97–140 (NEKNNQSNNNNNNNNNNNNNNNNNNNNNNNNNNNNNNNNNNKPK) are disordered. The segment covering 104 to 137 (NNNNNNNNNNNNNNNNNNNNNNNNNNNNNNNNNN) has biased composition (low complexity). The JmjC domain occupies 127–302 (NNNNNNNNNN…ELLKSNKLWC (176 aa)).

In Dictyostelium discoideum (Social amoeba), this protein is JmjC domain-containing protein C (jcdC).